A 357-amino-acid polypeptide reads, in one-letter code: Heat-inducible transcription repressor HrcA (357 aa).

It belongs to the HrcA family.

In terms of biological role, negative regulator of class I heat shock genes (grpE-dnaK-dnaJ and groELS operons). Prevents heat-shock induction of these operons. This is Heat-inducible transcription repressor HrcA from Anabaena sp. (strain L31).